Reading from the N-terminus, the 173-residue chain is MAGSVNKVILIGNVGADPEIRRTQDGRPIANLRIATSETWRDRNSGERKEKTEWHTVVVFNEGLCKVVEQYVKKGAKLYIEGQLQTRKWQDQTGNDRYSTEIVLQGFNSTLTMLDGRGEGGGGRSGGGDFGGGNDYGSGGGYDQQSSPRGGSSRGGGQPSGGFSNDMDDDIPF.

The 107-residue stretch at 5–111 (VNKVILIGNV…IVLQGFNSTL (107 aa)) folds into the SSB domain. Residues 114–173 (LDGRGEGGGGRSGGGDFGGGNDYGSGGGYDQQSSPRGGSSRGGGQPSGGFSNDMDDDIPF) form a disordered region. Over residues 119-142 (EGGGGRSGGGDFGGGNDYGSGGGY) the composition is skewed to gly residues. The Important for interaction with partner proteins motif lies at 168 to 173 (DDDIPF).

As to quaternary structure, homotetramer.

Functionally, plays an important role in DNA replication, recombination and repair. Binds to ssDNA and to an array of partner proteins to recruit them to their sites of action during DNA metabolism. The sequence is that of Single-stranded DNA-binding protein (ssb) from Agrobacterium fabrum (strain C58 / ATCC 33970) (Agrobacterium tumefaciens (strain C58)).